Consider the following 274-residue polypeptide: uncharacterized protein (274 aa).

The first 21 residues, 1 to 21, serve as a signal peptide directing secretion; sequence MRKLTLLPLLLIITGLLTVQA. A helical transmembrane segment spans residues 249 to 266; it reads TSAFVILTASALIFIYLF.

The protein localises to the membrane. This is an uncharacterized protein from Archaeoglobus fulgidus (strain ATCC 49558 / DSM 4304 / JCM 9628 / NBRC 100126 / VC-16).